Reading from the N-terminus, the 100-residue chain is Aspartyl/glutamyl-tRNA(Asn/Gln) amidotransferase subunit C (100 aa).

It belongs to the GatC family. Heterotrimer of A, B and C subunits.

The catalysed reaction is L-glutamyl-tRNA(Gln) + L-glutamine + ATP + H2O = L-glutaminyl-tRNA(Gln) + L-glutamate + ADP + phosphate + H(+). It carries out the reaction L-aspartyl-tRNA(Asn) + L-glutamine + ATP + H2O = L-asparaginyl-tRNA(Asn) + L-glutamate + ADP + phosphate + 2 H(+). Its function is as follows. Allows the formation of correctly charged Asn-tRNA(Asn) or Gln-tRNA(Gln) through the transamidation of misacylated Asp-tRNA(Asn) or Glu-tRNA(Gln) in organisms which lack either or both of asparaginyl-tRNA or glutaminyl-tRNA synthetases. The reaction takes place in the presence of glutamine and ATP through an activated phospho-Asp-tRNA(Asn) or phospho-Glu-tRNA(Gln). The protein is Aspartyl/glutamyl-tRNA(Asn/Gln) amidotransferase subunit C of Streptococcus pneumoniae (strain P1031).